Here is a 330-residue protein sequence, read N- to C-terminus: Aspartate--ammonia ligase (330 aa).

The protein belongs to the class-II aminoacyl-tRNA synthetase family. AsnA subfamily.

Its subcellular location is the cytoplasm. It carries out the reaction L-aspartate + NH4(+) + ATP = L-asparagine + AMP + diphosphate + H(+). It functions in the pathway amino-acid biosynthesis; L-asparagine biosynthesis; L-asparagine from L-aspartate (ammonia route): step 1/1. This is Aspartate--ammonia ligase from Edwardsiella ictaluri (strain 93-146).